The chain runs to 123 residues: Large ribosomal subunit protein bL19 (123 aa).

The protein belongs to the bacterial ribosomal protein bL19 family.

In terms of biological role, this protein is located at the 30S-50S ribosomal subunit interface and may play a role in the structure and function of the aminoacyl-tRNA binding site. This chain is Large ribosomal subunit protein bL19, found in Ureaplasma parvum serovar 3 (strain ATCC 27815 / 27 / NCTC 11736).